Consider the following 420-residue polypeptide: 3-isopropylmalate dehydratase large subunit (420 aa).

Cys301, Cys361, and Cys364 together coordinate [4Fe-4S] cluster.

This sequence belongs to the aconitase/IPM isomerase family. LeuC type 2 subfamily. Heterodimer of LeuC and LeuD. [4Fe-4S] cluster serves as cofactor.

It catalyses the reaction (2R,3S)-3-isopropylmalate = (2S)-2-isopropylmalate. It participates in amino-acid biosynthesis; L-leucine biosynthesis; L-leucine from 3-methyl-2-oxobutanoate: step 2/4. Its function is as follows. Catalyzes the isomerization between 2-isopropylmalate and 3-isopropylmalate, via the formation of 2-isopropylmaleate. The protein is 3-isopropylmalate dehydratase large subunit of Desulfovibrio desulfuricans (strain ATCC 27774 / DSM 6949 / MB).